The following is a 91-amino-acid chain: Early E3B 10.4 kDa protein (91 aa).

The signal sequence occupies residues 1 to 22 (MIPRVLILLTLVALFCACSTLA). At 23–34 (AVAHIEVDCIPP) the chain is on the lumenal side. The chain crosses the membrane as a helical span at residues 35–60 (FTVYLLYGFVTLILICSLVTVVIAFI). At 61–91 (QFIDWICVRIAYLRHHPQYRDRTIADLLRIL) the chain is on the cytoplasmic side.

Belongs to the adenoviridae E3B family.

The protein localises to the host endoplasmic reticulum membrane. Functionally, down-regulates the EGF receptor. This Homo sapiens (Human) protein is Early E3B 10.4 kDa protein.